The chain runs to 269 residues: UPF0354 protein YtpQ (269 aa).

Belongs to the UPF0354 family.

This is UPF0354 protein YtpQ (ytpQ) from Bacillus subtilis (strain 168).